We begin with the raw amino-acid sequence, 496 residues long: Glycerol kinase (496 aa).

Position 12 (Thr12) interacts with ADP. The ATP site is built by Thr12, Thr13, and Ser14. Thr12 serves as a coordination point for sn-glycerol 3-phosphate. Arg16 is an ADP binding site. Residues Arg82, Glu83, and Tyr134 each coordinate sn-glycerol 3-phosphate. The glycerol site is built by Arg82, Glu83, and Tyr134. His230 is modified (phosphohistidine; by HPr). Residue Asp244 coordinates sn-glycerol 3-phosphate. The glycerol site is built by Asp244 and Gln245. Residues Thr266 and Gly309 each coordinate ADP. Thr266, Gly309, Gln313, and Gly410 together coordinate ATP. ADP-binding residues include Gly410 and Asn414.

Belongs to the FGGY kinase family. As to quaternary structure, homotetramer and homodimer (in equilibrium). In terms of processing, the phosphoenolpyruvate-dependent sugar phosphotransferase system (PTS), including enzyme I, and histidine-containing protein (HPr) are required for the phosphorylation, which leads to the activation of the enzyme.

The enzyme catalyses glycerol + ATP = sn-glycerol 3-phosphate + ADP + H(+). The protein operates within polyol metabolism; glycerol degradation via glycerol kinase pathway; sn-glycerol 3-phosphate from glycerol: step 1/1. Activated by phosphorylation and inhibited by fructose 1,6-bisphosphate (FBP). Key enzyme in the regulation of glycerol uptake and metabolism. Catalyzes the phosphorylation of glycerol to yield sn-glycerol 3-phosphate. In Geobacillus sp. (strain WCH70), this protein is Glycerol kinase.